The primary structure comprises 1406 residues: Protein FAM135B (1406 aa).

2 disordered regions span residues 519-548 and 770-820; these read WTGQ…DGQA and SVSA…GDSG. Phosphoserine is present on residues S777 and S778. The segment covering 804 to 816 has biased composition (polar residues); it reads KSQGSPGSCSQLC.

Belongs to the FAM135 family.

In Homo sapiens (Human), this protein is Protein FAM135B (FAM135B).